Consider the following 156-residue polypeptide: Small ribosomal subunit protein uS7 (156 aa).

The protein belongs to the universal ribosomal protein uS7 family. Part of the 30S ribosomal subunit. Contacts proteins S9 and S11.

In terms of biological role, one of the primary rRNA binding proteins, it binds directly to 16S rRNA where it nucleates assembly of the head domain of the 30S subunit. Is located at the subunit interface close to the decoding center, probably blocks exit of the E-site tRNA. The polypeptide is Small ribosomal subunit protein uS7 (Histophilus somni (strain 129Pt) (Haemophilus somnus)).